The chain runs to 470 residues: Glutamate--tRNA ligase 1 (470 aa).

Positions 15–25 match the 'HIGH' region motif; sequence PSPTGTMHIGT. The 'KMSKS' region signature appears at 241-245; the sequence is KLSKR. Residue lysine 244 coordinates ATP.

The protein belongs to the class-I aminoacyl-tRNA synthetase family. Glutamate--tRNA ligase type 1 subfamily. As to quaternary structure, monomer.

Its subcellular location is the cytoplasm. It catalyses the reaction tRNA(Glu) + L-glutamate + ATP = L-glutamyl-tRNA(Glu) + AMP + diphosphate. Catalyzes the attachment of glutamate to tRNA(Glu) in a two-step reaction: glutamate is first activated by ATP to form Glu-AMP and then transferred to the acceptor end of tRNA(Glu). The polypeptide is Glutamate--tRNA ligase 1 (Jannaschia sp. (strain CCS1)).